The primary structure comprises 284 residues: MSAEKAKAYWQLMRMDRPIGSLLLLWPTVWALVIAAQGIPSWDVLIVFVLGVFLMRSAGCVINDFADRKVDGHVKRTKQRPLPSGKVTAKEAIGLFLVLAVSSFLLVLTMNPLTIQLSFAGLVLAFIYPFMKRYTHIPQLFLGLAFSWAIPMAWAAQTGELPVMVWFVFVINALWTIAYDTQYAMVDRDDDLKIGIKSTAILFGRHDKLIIGVLQLVTLAMLVGLGQFYQLGQSYYWTVLIAASLFVYQQHLIRHRERDLCFRAFLNNNYVGMVIAIGLLVAFW.

7 helical membrane passes run 33 to 53 (VIAA…LGVF), 93 to 113 (IGLF…MNPL), 136 to 156 (HIPQ…AWAA), 159 to 179 (GELP…TIAY), 209 to 229 (LIIG…GQFY), 235 to 252 (YYWT…QQHL), and 264 to 284 (AFLN…VAFW).

This sequence belongs to the UbiA prenyltransferase family. It depends on Mg(2+) as a cofactor.

It is found in the cell inner membrane. It carries out the reaction all-trans-octaprenyl diphosphate + 4-hydroxybenzoate = 4-hydroxy-3-(all-trans-octaprenyl)benzoate + diphosphate. It participates in cofactor biosynthesis; ubiquinone biosynthesis. Functionally, catalyzes the prenylation of para-hydroxybenzoate (PHB) with an all-trans polyprenyl group. Mediates the second step in the final reaction sequence of ubiquinone-8 (UQ-8) biosynthesis, which is the condensation of the polyisoprenoid side chain with PHB, generating the first membrane-bound Q intermediate 3-octaprenyl-4-hydroxybenzoate. This chain is 4-hydroxybenzoate octaprenyltransferase, found in Vibrio parahaemolyticus serotype O3:K6 (strain RIMD 2210633).